The sequence spans 232 residues: Large ribosomal subunit protein uL1 (232 aa).

It belongs to the universal ribosomal protein uL1 family. In terms of assembly, part of the 50S ribosomal subunit.

Functionally, binds directly to 23S rRNA. The L1 stalk is quite mobile in the ribosome, and is involved in E site tRNA release. In terms of biological role, protein L1 is also a translational repressor protein, it controls the translation of the L11 operon by binding to its mRNA. The sequence is that of Large ribosomal subunit protein uL1 from Chlamydia trachomatis serovar D (strain ATCC VR-885 / DSM 19411 / UW-3/Cx).